A 421-amino-acid polypeptide reads, in one-letter code: UDP-N-acetylglucosamine 1-carboxyvinyltransferase (421 aa).

Phosphoenolpyruvate is bound at residue 22 to 23 (KN). Arginine 91 lines the UDP-N-acetyl-alpha-D-glucosamine pocket. Catalysis depends on cysteine 115, which acts as the Proton donor. Cysteine 115 carries the post-translational modification 2-(S-cysteinyl)pyruvic acid O-phosphothioketal. Residues 120–124 (RPIDL), aspartate 306, and isoleucine 328 contribute to the UDP-N-acetyl-alpha-D-glucosamine site.

It belongs to the EPSP synthase family. MurA subfamily.

The protein resides in the cytoplasm. The enzyme catalyses phosphoenolpyruvate + UDP-N-acetyl-alpha-D-glucosamine = UDP-N-acetyl-3-O-(1-carboxyvinyl)-alpha-D-glucosamine + phosphate. It participates in cell wall biogenesis; peptidoglycan biosynthesis. Cell wall formation. Adds enolpyruvyl to UDP-N-acetylglucosamine. This is UDP-N-acetylglucosamine 1-carboxyvinyltransferase from Methylacidiphilum infernorum (isolate V4) (Methylokorus infernorum (strain V4)).